Consider the following 558-residue polypeptide: Potassium-transporting ATPase potassium-binding subunit (558 aa).

12 helical membrane passes run Leu-2–Leu-22, Val-66–Phe-86, Ala-135–Ile-155, Ile-177–Thr-197, Leu-253–Met-273, Gly-280–Val-300, Phe-327–Val-347, Leu-354–Gly-374, Gly-378–Gly-398, Ile-413–Ile-433, Leu-482–Leu-502, and Gly-528–Leu-548.

Belongs to the KdpA family. As to quaternary structure, the system is composed of three essential subunits: KdpA, KdpB and KdpC.

Its subcellular location is the cell inner membrane. Part of the high-affinity ATP-driven potassium transport (or Kdp) system, which catalyzes the hydrolysis of ATP coupled with the electrogenic transport of potassium into the cytoplasm. This subunit binds the periplasmic potassium ions and delivers the ions to the membrane domain of KdpB through an intramembrane tunnel. The sequence is that of Potassium-transporting ATPase potassium-binding subunit from Synechocystis sp. (strain ATCC 27184 / PCC 6803 / Kazusa).